The primary structure comprises 516 residues: Effector protein hopAB1 (516 aa).

2 disordered regions span residues 1-93 (MSGI…AQPA) and 175-259 (RALA…DEAL). Over residues 16–30 (WRADDEPVTERERDS) the composition is skewed to basic and acidic residues. Over residues 31-41 (SSGANLTNSPQ) the composition is skewed to polar residues. A compositionally biased stretch (pro residues) spans 81–90 (PVEPRQPPEA). Composition is skewed to low complexity over residues 183–196 (PAPS…SRSS) and 212–224 (QTSS…SSTS).

Belongs to the HopAB family.

The protein resides in the secreted. Functionally, effector protein that plays different roles depending on the species and plant cultivars that interact with the pathogen. Acts as a virulence determinant by enhancing the development of disease symptoms and bacterial growth. Acts as an avirulence factor by eliciting hypersensitive response (HR) and plant resistance. This chain is Effector protein hopAB1 (hopAB1), found in Pseudomonas syringae pv. syringae (strain B728a).